A 126-amino-acid chain; its full sequence is Profilin-3 (126 aa).

Belongs to the profilin family. Occurs in many kinds of cells as a complex with monomeric actin in a 1:1 ratio.

It is found in the cytoplasm. The protein resides in the cytoskeleton. In terms of biological role, binds to actin and affects the structure of the cytoskeleton. At high concentrations, profilin prevents the polymerization of actin, whereas it enhances it at low concentrations. By binding to PIP2, it inhibits the formation of IP3 and DG. The protein is Profilin-3 (proC) of Dictyostelium discoideum (Social amoeba).